A 463-amino-acid polypeptide reads, in one-letter code: Type II NADH:quinone oxidoreductase Ndh (463 aa).

FAD is bound by residues 21–25 (GSGFG) and valine 89. Glutamate 184 is a catalytic residue. FAD contacts are provided by residues aspartate 322 and 333 to 334 (AQ). A helical membrane pass occupies residues 387-407 (FSGFIAWLIWLVLHLAYLIGF).

Belongs to the NADH dehydrogenase family. FAD is required as a cofactor.

The protein localises to the cell inner membrane. The catalysed reaction is a quinone + NADH + H(+) = a quinol + NAD(+). The enzyme catalyses a menaquinone + NADH + H(+) = a menaquinol + NAD(+). It catalyses the reaction a ubiquinone + NADH + H(+) = a ubiquinol + NAD(+). With respect to regulation, inhibited by phenothiazine analogs. Inhibited by 2-mercapto-quinazolinones. Not inhibited by classic inhibitors of type I NADH dehydrogenase, such as rotenone, piericidin A and pyridaben. Functionally, alternative, nonproton pumping NADH:quinone oxidoreductase that delivers electrons to the respiratory chain by oxidation of NADH and reduction of quinones. Ndh is probably the main NADH dehydrogenase of M.tuberculosis. This Mycobacterium tuberculosis (strain ATCC 25618 / H37Rv) protein is Type II NADH:quinone oxidoreductase Ndh.